We begin with the raw amino-acid sequence, 1489 residues long: Type-2 histone deacetylase 1 (1489 aa).

4 stretches are compositionally biased toward low complexity: residues 135-163, 190-259, 281-306, and 325-399; these read NNNNINNNNNSNGSNSSNNSHNGGSSPSG, SNGN…SRNL, NIINNNSNNNTNNNNNIMNGTTTSTT, and SPTS…NINN. Disordered regions lie at residues 135 to 259, 281 to 556, 915 to 935, 955 to 1024, and 1151 to 1185; these read NNNN…SRNL, NIIN…NYQQ, NNNNNNNNNNNNNNNEEDDQL, NISK…RDRD, and STGINQFSTSTPITTTGTATVTPGSTTSSTNGEQC. The segment covering 400–430 has biased composition (polar residues); that stretch reads VANGTPRPSLQTSRLQGKLPSPQQYNTSPSH. Low complexity-rich tracts occupy residues 431 to 450, 486 to 553, 915 to 928, and 959 to 988; these read QQYPSPKNNNNSNNIIPIQS, NNNN…NNSN, NNNNNNNNNNNNNN, and NNNNNNNNNNNNNNNNNNNNNNNNNNNNNN. Basic and acidic residues-rich tracts occupy residues 989-1001 and 1010-1024; these read RNRDRDREFERDN and IEKERNRNNRIRDRD. Residues 1158–1180 show a composition bias toward low complexity; it reads STSTPITTTGTATVTPGSTTSST. The Proton acceptor role is filled by H1232. The segment covering 1325 to 1335 has biased composition (acidic residues); sequence EQNDYDDDDNN. The disordered stretch occupies residues 1325–1374; sequence EQNDYDDDDNNNDVNNNNNNNNNNNNNNNNNNNNKNNNNNNSNSITQQST. Residues 1336–1367 are compositionally biased toward low complexity; it reads NDVNNNNNNNNNNNNNNNNNNNNKNNNNNNSN.

The protein belongs to the histone deacetylase family. HD type 2 subfamily.

It is found in the nucleus. The protein resides in the cytoplasm. It carries out the reaction N(6)-acetyl-L-lysyl-[histone] + H2O = L-lysyl-[histone] + acetate. In terms of biological role, responsible for the deacetylation of lysine residues on the N-terminal part of the core histones (H2A, H2B, H3 and H4). Histone deacetylation plays an important role in transcriptional regulation, cell cycle progression and developmental events. Histone deacetylases act via the formation of large multiprotein complexes. This is Type-2 histone deacetylase 1 (hdaD) from Dictyostelium discoideum (Social amoeba).